We begin with the raw amino-acid sequence, 255 residues long: Ribonuclease HII (255 aa).

An RNase H type-2 domain is found at 72 to 255 (QYIAGIDEAG…RSFAPVKAHE (184 aa)). Asp78, Glu79, and Asp170 together coordinate a divalent metal cation.

Belongs to the RNase HII family. Requires Mn(2+) as cofactor. Mg(2+) serves as cofactor.

It is found in the cytoplasm. The catalysed reaction is Endonucleolytic cleavage to 5'-phosphomonoester.. Its function is as follows. Endonuclease that specifically degrades the RNA of RNA-DNA hybrids. The polypeptide is Ribonuclease HII (Bacillus licheniformis (strain ATCC 14580 / DSM 13 / JCM 2505 / CCUG 7422 / NBRC 12200 / NCIMB 9375 / NCTC 10341 / NRRL NRS-1264 / Gibson 46)).